Consider the following 446-residue polypeptide: MNAQEANFDGLVGPTHNYAGLSFGNVASLNNEKSAANPKAAAKQGLRKMKQLADLGFAQGVLPPQERPSLRLLRELGFSGKDADVIAKAAKQAPELLAAASSASAMWTANAATVSPSADTGDGRVHFTPANLCSKLHRAIEHEATRRTLSTLFADPAHFAVHEALTGTPALGDEGAANHTRFCAEYGKPGVEFFVYGRAEYRRGPEPKRFPARQTFEASRAVAQRHGLDETATVYAQQDPDVIDAGVFHNDVISVGNRDTLFTHERAFVNKQAIYDTLTATLDARGARLNVIEVPEAAVSVNDAVTSYLFNSQLLSRADGSQVLVVPQECRENANVAAYLDELAAGNGPIRDVLVFDLRESMKNGGGPACLRLRVVLNDAERAAVTSNVWMNDTLFASLDAWIEKHYRDRLAPDDLADPTLLDESRTALDELTQILRVGSLYDFQR.

Substrate contacts are provided by residues 19-28, Asn-110, and 137-138; these read AGLSFGNVAS and HR. Glu-174 is a catalytic residue. Arg-213 serves as a coordination point for substrate. The active site involves His-249. Residues Asp-251 and Asn-364 each contribute to the substrate site. Cys-370 acts as the Nucleophile in catalysis.

The protein belongs to the succinylarginine dihydrolase family. In terms of assembly, homodimer.

It catalyses the reaction N(2)-succinyl-L-arginine + 2 H2O + 2 H(+) = N(2)-succinyl-L-ornithine + 2 NH4(+) + CO2. The protein operates within amino-acid degradation; L-arginine degradation via AST pathway; L-glutamate and succinate from L-arginine: step 2/5. Catalyzes the hydrolysis of N(2)-succinylarginine into N(2)-succinylornithine, ammonia and CO(2). This Burkholderia ambifaria (strain MC40-6) protein is N-succinylarginine dihydrolase.